The primary structure comprises 41 residues: Large ribosomal subunit protein bL36 (41 aa).

This sequence belongs to the bacterial ribosomal protein bL36 family.

The polypeptide is Large ribosomal subunit protein bL36 (Rhodopseudomonas palustris (strain TIE-1)).